Here is a 393-residue protein sequence, read N- to C-terminus: MAATVRPLEKYRRIVIKIGSALLVDRKSGLKKSWLDAMCVDIAALKAKGVEVLVVSSGAIALGRTVLNLPAGALKLEESQAAAAVGQIALARAWSESLSTDQIIAGQILLTLGDTEERRRYLNARATINQLLKLGSVPIINENDTVATTEIRYGDNDRLAARVATMVGADLLVLLSDIDGLYTAPPHLDPQARFLETIAEITPEIEAMAGGAASELSRGGMRTKIDAGKIATTAGCAMIIASGKPEHPLKAIEAGARSSWFAPSGSPVTARKTWIAGQLLPAGSIAIDAGAETALRSGKSLLPAGVRQVTGTFSRGDTIAILNASGREIARGLAGYDADDARQIAGKKSAEIAAILGYAGRTAMVHRDDMVMTAPSGARSEEGGNEKKGKLHA.

Position 17 (lysine 17) interacts with ATP. Serine 57, aspartate 144, and asparagine 156 together coordinate substrate. 176 to 177 contributes to the ATP binding site; sequence SD. The region spanning 282 to 359 is the PUA domain; sequence AGSIAIDAGA…AEIAAILGYA (78 aa). Residues 374–393 form a disordered region; it reads APSGARSEEGGNEKKGKLHA. The span at 379-393 shows a compositional bias: basic and acidic residues; the sequence is RSEEGGNEKKGKLHA.

It belongs to the glutamate 5-kinase family.

It localises to the cytoplasm. It carries out the reaction L-glutamate + ATP = L-glutamyl 5-phosphate + ADP. The protein operates within amino-acid biosynthesis; L-proline biosynthesis; L-glutamate 5-semialdehyde from L-glutamate: step 1/2. Catalyzes the transfer of a phosphate group to glutamate to form L-glutamate 5-phosphate. This Sinorhizobium fredii (strain NBRC 101917 / NGR234) protein is Glutamate 5-kinase.